The primary structure comprises 81 residues: Sec-independent protein translocase protein TatA (81 aa).

The chain crosses the membrane as a helical span at residues 1–21 (MGSLSLWHWIIVGAVLLLLFG). Residues 41–81 (KKGLSEDDEKPEAARPAEPARSLDHQPVAEQPKVSETHRIG) form a disordered region.

It belongs to the TatA/E family. In terms of assembly, the Tat system comprises two distinct complexes: a TatABC complex, containing multiple copies of TatA, TatB and TatC subunits, and a separate TatA complex, containing only TatA subunits. Substrates initially bind to the TatABC complex, which probably triggers association of the separate TatA complex to form the active translocon.

It is found in the cell inner membrane. Its function is as follows. Part of the twin-arginine translocation (Tat) system that transports large folded proteins containing a characteristic twin-arginine motif in their signal peptide across membranes. TatA could form the protein-conducting channel of the Tat system. The chain is Sec-independent protein translocase protein TatA from Beijerinckia indica subsp. indica (strain ATCC 9039 / DSM 1715 / NCIMB 8712).